A 284-amino-acid chain; its full sequence is Protein SCO1 homolog, mitochondrial (284 aa).

The segment at 46 to 73 is disordered; sequence RAFSAGPPPPGAGPEPKGGQAGSHRPKP. Residues 81-98 traverse the membrane as a helical segment; the sequence is LALTFAIGGSLLAGMKYF. The Mitochondrial intermembrane portion of the chain corresponds to 99–284; sequence KKEKIEKLEK…AHMRSHMKKR (186 aa). Residues 101-114 form an important for dimerization region; it reads EKIEKLEKQRHRSI. Cu cation contacts are provided by cysteine 152, cysteine 156, and histidine 243. The cysteines at positions 152 and 156 are disulfide-linked.

Belongs to the SCO1/2 family. As to quaternary structure, homodimer. Interacts with COA6. Found in a complex with TMEM177, COX20, COA6, MT-CO2/COX2, COX18 and SCO2. Interacts with TMEM177 in a COX20-dependent manner. Interacts with COX20 in a MT-CO2/COX2- and COX18-dependent manner. Interacts with COX16.

It is found in the mitochondrion. It localises to the mitochondrion inner membrane. Copper metallochaperone essential for the maturation of cytochrome c oxidase subunit II (MT-CO2/COX2). Not required for the synthesis of MT-CO2/COX2 but plays a crucial role in stabilizing MT-CO2/COX2 during its subsequent maturation. Involved in transporting copper to the Cu(A) site on MT-CO2/COX2. Plays an important role in the regulation of copper homeostasis by controlling the abundance and cell membrane localization of copper transporter CTR1. The protein is Protein SCO1 homolog, mitochondrial (Sco1) of Mus musculus (Mouse).